Here is a 559-residue protein sequence, read N- to C-terminus: Poly [ADP-ribose] polymerase 2 (559 aa).

Positions 1 to 58 (MAPRRQRSGSGRRVLNEAKKVDNGNKATEDDSPPGKKMRTCQRKGPMAGGKDADRTKD) are disordered. Residues 1–83 (MAPRRQRSGS…VDPECAAKLG (83 aa)) are N-terminal region (NTR). The segment covering 14-29 (VLNEAKKVDNGNKATE) has biased composition (basic and acidic residues). 2 consecutive short sequence motifs (nuclear localization signal) follow at residues 19–20 (KK) and 33–39 (PPGKKMR). An N6-(ADP-ribosyl)lysine; alternate mark is found at lysine 36 and lysine 37. Lysine 36 and lysine 37 each carry N6-acetyllysine; alternate. Residues 84-181 (KAHVYCEGDD…ENFEKVPGKY (98 aa)) enclose the WGR domain. A PARP alpha-helical domain is found at 207–324 (ESQLDLRVQE…DIEIALKLVK (118 aa)). At serine 208 the chain carries Phosphoserine. Positions 332 to 559 (HPLDQHYRNL…KIQFNFLQLW (228 aa)) constitute a PARP catalytic domain. Residues 404 to 406 (HGS), glycine 413, arginine 420, and serine 446 each bind NAD(+). Glutamate 534 acts as the For poly [ADP-ribose] polymerase activity in catalysis.

It belongs to the ARTD/PARP family. Component of a base excision repair (BER) complex, containing at least XRCC1, PARP1, POLB and LRIG3. Homo- and heterodimer with PARP1. Interacts (via the PARP catalytic domain) with HPF1. Interacts with core nucleosomes. In terms of processing, auto poly-ADP-ribosylated on serine residues, leading to dissociation of the PARP2-HPF1 complex from chromatin. Poly-ADP-ribosylated by PARP1. Acetylation reduces DNA binding and enzymatic activity. Post-translationally, proteolytically cleaved by caspase-8 (CASP8) in response to apoptosis, leading to its inactivation. As to expression, widely expressed; the highest levels were in testis followed by ovary. Expression is correlated with proliferation, with higher levels occurring during early fetal development and organogenesis and in the highly proliferative cell compartments of adult.

Its subcellular location is the nucleus. The protein localises to the chromosome. It carries out the reaction NAD(+) + (ADP-D-ribosyl)n-acceptor = nicotinamide + (ADP-D-ribosyl)n+1-acceptor + H(+).. The catalysed reaction is L-seryl-[protein] + NAD(+) = O-(ADP-D-ribosyl)-L-seryl-[protein] + nicotinamide + H(+). The enzyme catalyses L-aspartyl-[protein] + NAD(+) = 4-O-(ADP-D-ribosyl)-L-aspartyl-[protein] + nicotinamide. It catalyses the reaction L-glutamyl-[protein] + NAD(+) = 5-O-(ADP-D-ribosyl)-L-glutamyl-[protein] + nicotinamide. ADP-ribosyltransferase activity is regulated via an allosteric activation mechanism. In absence of activation signal, PARP2 is autoinhibited by the PARP alpha-helical domain (also named HD region), which prevents effective NAD(+)-binding. Activity is highly stimulated by signals, which unfold the PARP alpha-helical domain, relieving autoinhibition. Poly-ADP-ribosyltransferase activity is tightly regulated and PARP2 is removed from damaged chromatin following initial poly-ADP-ribosylation of chromatin to avoid prolonged residence (trapping) that has cytotoxic consequences. CHD1L promotes PARP2 removal from chromatin. Poly-ADP-ribosyltransferase that mediates poly-ADP-ribosylation of proteins and plays a key role in DNA repair. Mediates glutamate, aspartate or serine ADP-ribosylation of proteins: the ADP-D-ribosyl group of NAD(+) is transferred to the acceptor carboxyl group of target residues and further ADP-ribosyl groups are transferred to the 2'-position of the terminal adenosine moiety, building up a polymer with an average chain length of 20-30 units. Serine ADP-ribosylation of proteins constitutes the primary form of ADP-ribosylation of proteins in response to DNA damage. Mediates glutamate and aspartate ADP-ribosylation of target proteins in absence of HPF1. Following interaction with HPF1, catalyzes serine ADP-ribosylation of target proteins; HPF1 conferring serine specificity by completing the PARP2 active site. PARP2 initiates the repair of double-strand DNA breaks: recognizes and binds DNA breaks within chromatin and recruits HPF1, licensing serine ADP-ribosylation of target proteins, such as histones, thereby promoting decompaction of chromatin and the recruitment of repair factors leading to the reparation of DNA strand breaks. HPF1 initiates serine ADP-ribosylation but restricts the polymerase activity of PARP2 in order to limit the length of poly-ADP-ribose chains. Specifically mediates formation of branched poly-ADP-ribosylation. Branched poly-ADP-ribose chains are specifically recognized by some factors, such as APLF. In addition to proteins, also able to ADP-ribosylate DNA: preferentially acts on 5'-terminal phosphates at DNA strand breaks termini in nicked duplex. The protein is Poly [ADP-ribose] polymerase 2 (Parp2) of Mus musculus (Mouse).